The sequence spans 348 residues: MAFSLDSILRDNIKNAKPYSSARDEYKGTEGIFLDANENPYGSAIQKMVNRYPDPLQRDVKTALSALKNVSAEHIFFGNGSDEPIDLLIRATCQPGKDSILILPPTYGMYEVSAGINDVDIISVPLTKAFDLDVDAILAAVKTHTKIIFICSPNNPTGNLMSEDKVKRILNAFSGIVVVDEAYIDFADTKGFVPLLDQYPNMVVLQTFSKAWGMAALRLGTAFASKEIVSVLNKIKPPYNINLLTQEAALEALQNVSVKDEMVYKILKQRDWLREELSKLPVCLELYPSDANFILMRTADGKKVYDYLVEHIVITRDRSKIILCEGCVRITVGTEAENKRLLDVLKTY.

An N6-(pyridoxal phosphate)lysine modification is found at K210.

This sequence belongs to the class-II pyridoxal-phosphate-dependent aminotransferase family. Histidinol-phosphate aminotransferase subfamily. As to quaternary structure, homodimer. Requires pyridoxal 5'-phosphate as cofactor.

It carries out the reaction L-histidinol phosphate + 2-oxoglutarate = 3-(imidazol-4-yl)-2-oxopropyl phosphate + L-glutamate. Its pathway is amino-acid biosynthesis; L-histidine biosynthesis; L-histidine from 5-phospho-alpha-D-ribose 1-diphosphate: step 7/9. The chain is Histidinol-phosphate aminotransferase from Cytophaga hutchinsonii (strain ATCC 33406 / DSM 1761 / CIP 103989 / NBRC 15051 / NCIMB 9469 / D465).